A 1941-amino-acid chain; its full sequence is Myosin-2 (1941 aa).

One can recognise a Myosin N-terminal SH3-like domain in the interval 33–82 (DAKTSVFVAEPKESFVKGTIQSREGGKVTVKTEGGATLTVKDDQVFPMNP). A phosphothreonine mark is found at Thr-64 and Thr-69. The Myosin motor domain occupies 86-784 (DKIEDMAMMT…LLGLLEEMRD (699 aa)). Lys-130 is subject to N6,N6,N6-trimethyllysine. Position 179–186 (179–186 (GESGAGKT)) interacts with ATP. Phosphotyrosine is present on Tyr-389. Residue Ser-392 is modified to Phosphoserine. Position 419 is a phosphothreonine (Thr-419). Ser-625 is modified (phosphoserine). Positions 661–683 (LNKLMTNLRSTHPHFVRCIIPNE) are actin-binding. At His-759 the chain carries Pros-methylhistidine. Residues 763-777 (KFGHTKVFFKAGLLG) form an actin-binding region. One can recognise an IQ domain in the interval 787-816 (LAQLITRTQARCRGFLARVEYQRMVERREA). Residues 845-1941 (LLKSAETEKE…EVHTKVISEE (1097 aa)) are a coiled coil. Phosphoserine occurs at positions 1094 and 1098. 2 disordered regions span residues 1128–1149 (IEAERASRAKAEKQRSDLSREL) and 1155–1174 (RLEEAGGATSAQIEMNKKRE). The segment covering 1130 to 1149 (AERASRAKAEKQRSDLSREL) has biased composition (basic and acidic residues). A phosphoserine mark is found at Ser-1164 and Ser-1239. The residue at position 1243 (Thr-1243) is a Phosphothreonine. A Phosphoserine modification is found at Ser-1245. Residue Thr-1257 is modified to Phosphothreonine. Ser-1263 is subject to Phosphoserine. The residue at position 1288 (Thr-1288) is a Phosphothreonine. 4 positions are modified to phosphoserine: Ser-1290, Ser-1294, Ser-1305, and Ser-1308. At Thr-1469 the chain carries Phosphothreonine. Ser-1476 is subject to Phosphoserine. Tyr-1494 bears the Phosphotyrosine mark. A Phosphoserine modification is found at Ser-1497. Phosphothreonine is present on Thr-1503. Ser-1516 is modified (phosphoserine). A Phosphothreonine modification is found at Thr-1519. Residues Ser-1556, Ser-1576, Ser-1602, Ser-1605, Ser-1716, and Ser-1728 each carry the phosphoserine modification. 2 positions are modified to phosphothreonine: Thr-1732 and Thr-1738. Ser-1741 is modified (phosphoserine).

The protein belongs to the TRAFAC class myosin-kinesin ATPase superfamily. Myosin family. Muscle myosin is a hexameric protein that consists of 2 heavy chain subunits (MHC), 2 alkali light chain subunits (MLC) and 2 regulatory light chain subunits (MLC-2). Interacts with GCSAM.

It localises to the cytoplasm. The protein resides in the myofibril. Its function is as follows. Myosins are actin-based motor molecules with ATPase activity essential for muscle contraction. The chain is Myosin-2 from Homo sapiens (Human).